A 140-amino-acid chain; its full sequence is Small ribosomal subunit protein uS11 (140 aa).

The segment at 116–140 (GRVEDVTPIPHDGTRPKGGRRGRRV) is disordered.

This sequence belongs to the universal ribosomal protein uS11 family. In terms of assembly, part of the 30S ribosomal subunit.

In terms of biological role, located on the platform of the 30S subunit. In Thermococcus kodakarensis (strain ATCC BAA-918 / JCM 12380 / KOD1) (Pyrococcus kodakaraensis (strain KOD1)), this protein is Small ribosomal subunit protein uS11.